Consider the following 126-residue polypeptide: Methylglyoxal synthase (126 aa).

The 126-residue stretch at 1–126 (MEKKIALIAH…LIKGLESLIF (126 aa)) folds into the MGS-like domain. Substrate-binding positions include His-10, Lys-14, 36-39 (TGTT), and 56-57 (SG). Asp-62 acts as the Proton donor/acceptor in catalysis. Residue His-89 coordinates substrate.

Belongs to the methylglyoxal synthase family.

The catalysed reaction is dihydroxyacetone phosphate = methylglyoxal + phosphate. Its function is as follows. Catalyzes the formation of methylglyoxal from dihydroxyacetone phosphate. The chain is Methylglyoxal synthase from Borreliella burgdorferi (strain ATCC 35210 / DSM 4680 / CIP 102532 / B31) (Borrelia burgdorferi).